Consider the following 545-residue polypeptide: CTP synthase (545 aa).

The segment at Met-1–Leu-266 is amidoligase domain. Residue Ser-14 participates in CTP binding. Ser-14 lines the UTP pocket. Residues Ser-15 to Ile-20 and Asp-72 each bind ATP. Positions 72 and 140 each coordinate Mg(2+). CTP is bound by residues Asp-147–Glu-149, Lys-187–Gln-192, and Lys-223. Residues Lys-187 to Gln-192 and Lys-223 contribute to the UTP site. Residue Lys-239–Val-241 coordinates ATP. One can recognise a Glutamine amidotransferase type-1 domain in the interval Val-291 to Arg-542. Gly-352 provides a ligand contact to L-glutamine. Cys-379 acts as the Nucleophile; for glutamine hydrolysis in catalysis. L-glutamine is bound by residues Leu-380–Gln-383, Glu-403, and Arg-470. Residues His-515 and Glu-517 contribute to the active site.

It belongs to the CTP synthase family. In terms of assembly, homotetramer.

The catalysed reaction is UTP + L-glutamine + ATP + H2O = CTP + L-glutamate + ADP + phosphate + 2 H(+). The enzyme catalyses L-glutamine + H2O = L-glutamate + NH4(+). It carries out the reaction UTP + NH4(+) + ATP = CTP + ADP + phosphate + 2 H(+). It functions in the pathway pyrimidine metabolism; CTP biosynthesis via de novo pathway; CTP from UDP: step 2/2. With respect to regulation, allosterically activated by GTP, when glutamine is the substrate; GTP has no effect on the reaction when ammonia is the substrate. The allosteric effector GTP functions by stabilizing the protein conformation that binds the tetrahedral intermediate(s) formed during glutamine hydrolysis. Inhibited by the product CTP, via allosteric rather than competitive inhibition. In terms of biological role, catalyzes the ATP-dependent amination of UTP to CTP with either L-glutamine or ammonia as the source of nitrogen. Regulates intracellular CTP levels through interactions with the four ribonucleotide triphosphates. This Shewanella putrefaciens (strain CN-32 / ATCC BAA-453) protein is CTP synthase.